Reading from the N-terminus, the 70-residue chain is Small ribosomal subunit protein bS21C (70 aa).

Positions 38 to 70 (YEKPTTERKRKKAAAVARLRKQVRRSMPPKKKY) are disordered. Residues 45–70 (RKRKKAAAVARLRKQVRRSMPPKKKY) are compositionally biased toward basic residues.

Belongs to the bacterial ribosomal protein bS21 family.

The polypeptide is Small ribosomal subunit protein bS21C (Burkholderia thailandensis (strain ATCC 700388 / DSM 13276 / CCUG 48851 / CIP 106301 / E264)).